A 717-amino-acid polypeptide reads, in one-letter code: Segment polarity protein dishevelled homolog DVL-3 (717 aa).

Residues Met-1 to Asp-82 form the DIX domain. The disordered stretch occupies residues Gly-89–Ser-235. Over residues His-118–Asn-127 the composition is skewed to polar residues. Residues Ala-140–Thr-155 are compositionally biased toward basic and acidic residues. Residues Glu-173–Phe-189 are compositionally biased toward low complexity. Residues Arg-199–Ser-210 are compositionally biased toward polar residues. A compositionally biased stretch (basic residues) spans Leu-212–Lys-224. The PDZ domain occupies Thr-248–Ala-333. The DEP domain occupies Ser-421–Asp-495. The tract at residues Pro-552–Ile-653 is disordered. Residues Gly-564–Ser-579 show a composition bias toward low complexity. 2 stretches are compositionally biased toward basic and acidic residues: residues Ser-580–Asp-593 and Glu-602–Ser-618. Basic residues predominate over residues His-629–His-645.

The protein belongs to the DSH family. As to expression, expressed throughout the epidermis.

Its subcellular location is the cytoplasm. Functionally, involved in the signal transduction pathway mediated by multiple Wnt genes. Required during ciliogenesis for the docking of basal bodies to the apical plasma membrane. The protein is Segment polarity protein dishevelled homolog DVL-3 of Xenopus laevis (African clawed frog).